The primary structure comprises 629 residues: tRNA uridine 5-carboxymethylaminomethyl modification enzyme MnmG (629 aa).

13 to 18 contributes to the FAD binding site; sequence GGGHAG. 273 to 287 lines the NAD(+) pocket; sequence GPRYCPSIEDKVNRF.

Belongs to the MnmG family. Homodimer. Heterotetramer of two MnmE and two MnmG subunits. FAD serves as cofactor.

It localises to the cytoplasm. Functionally, NAD-binding protein involved in the addition of a carboxymethylaminomethyl (cmnm) group at the wobble position (U34) of certain tRNAs, forming tRNA-cmnm(5)s(2)U34. The polypeptide is tRNA uridine 5-carboxymethylaminomethyl modification enzyme MnmG (Hahella chejuensis (strain KCTC 2396)).